The sequence spans 475 residues: Crocetin glucosyltransferase 3 (475 aa).

The Proton acceptor role is filled by His-16. His-16 is a binding site for an anthocyanidin. Asp-123 serves as the catalytic Charge relay. The UDP-alpha-D-glucose site is built by Thr-144, Ala-354, Gln-356, His-371, Trp-374, Asn-375, Ser-376, and Glu-379. Ala-394 lines the an anthocyanidin pocket. Residues Glu-395 and Gln-396 each coordinate UDP-alpha-D-glucose.

This sequence belongs to the UDP-glycosyltransferase family. As to expression, mainly expressed in stamens.

The enzyme catalyses crocetin + UDP-alpha-D-glucose = beta-D-glucosyl crocetin + UDP. It carries out the reaction beta-D-glucosyl crocetin + UDP-alpha-D-glucose = bis(beta-D-glucosyl) crocetin + UDP. It catalyses the reaction beta-D-gentiobiosyl crocetin + UDP-alpha-D-glucose = beta-D-gentiobiosyl beta-D-glucosyl crocetin + UDP. In terms of biological role, crocetin glucosyltransferase involved in the synthesis of crocin, one of the apocarotenoids responsible for the color and bitter taste of saffron. In Crocus sativus (Saffron), this protein is Crocetin glucosyltransferase 3 (GLT3).